The following is a 701-amino-acid chain: Translation factor GUF1, mitochondrial (701 aa).

Residues 1 to 29 (MSCCKGLTPQCVRVRLPRRPALSHPARLY) constitute a mitochondrion transit peptide. A compositionally biased stretch (low complexity) spans 23-50 (SHPARLYSSSSSSNSHSSPSRPRLLSRP). A disordered region spans residues 23–85 (SHPARLYSSS…RSSHHSSAPM (63 aa)). The 186-residue stretch at 98–283 (ERYRNFCVIA…AVIEQIPHPT (186 aa)) folds into the tr-type G domain. GTP is bound by residues 107 to 114 (AHVDHGKS), 172 to 176 (DTPGH), and 226 to 229 (NKID).

It belongs to the TRAFAC class translation factor GTPase superfamily. Classic translation factor GTPase family. LepA subfamily.

The protein resides in the mitochondrion inner membrane. It carries out the reaction GTP + H2O = GDP + phosphate + H(+). Promotes mitochondrial protein synthesis. May act as a fidelity factor of the translation reaction, by catalyzing a one-codon backward translocation of tRNAs on improperly translocated ribosomes. Binds to mitochondrial ribosomes in a GTP-dependent manner. In Pyricularia oryzae (strain 70-15 / ATCC MYA-4617 / FGSC 8958) (Rice blast fungus), this protein is Translation factor GUF1, mitochondrial.